Reading from the N-terminus, the 116-residue chain is Peptidyl-tRNA hydrolase (116 aa).

The protein belongs to the PTH2 family.

The protein localises to the cytoplasm. The catalysed reaction is an N-acyl-L-alpha-aminoacyl-tRNA + H2O = an N-acyl-L-amino acid + a tRNA + H(+). In terms of biological role, the natural substrate for this enzyme may be peptidyl-tRNAs which drop off the ribosome during protein synthesis. The polypeptide is Peptidyl-tRNA hydrolase (Methanococcus maripaludis (strain C7 / ATCC BAA-1331)).